The chain runs to 466 residues: Asparagine--tRNA ligase (466 aa).

This sequence belongs to the class-II aminoacyl-tRNA synthetase family. As to quaternary structure, homodimer.

The protein localises to the cytoplasm. The enzyme catalyses tRNA(Asn) + L-asparagine + ATP = L-asparaginyl-tRNA(Asn) + AMP + diphosphate + H(+). The chain is Asparagine--tRNA ligase from Shewanella putrefaciens (strain CN-32 / ATCC BAA-453).